Consider the following 234-residue polypeptide: Cytochrome b (234 aa).

The next 4 helical transmembrane spans lie at 33 to 53 (FGSLLGLCLMIQILTGLFLAM), 77 to 98 (WLIRYLHANGASMFFICLYMHV), 113 to 133 (WNIGIILLFAVMATAFMGYVL), and 178 to 198 (FFAFHFILPFIIAALVMIHLL). 2 residues coordinate heme b: histidine 83 and histidine 97. Residues histidine 182 and histidine 196 each contribute to the heme b site. Histidine 201 serves as a coordination point for a ubiquinone. A helical membrane pass occupies residues 226–234 (IKDVLGFLM).

Belongs to the cytochrome b family. In terms of assembly, the cytochrome bc1 complex contains 11 subunits: 3 respiratory subunits (MT-CYB, CYC1 and UQCRFS1), 2 core proteins (UQCRC1 and UQCRC2) and 6 low-molecular weight proteins (UQCRH/QCR6, UQCRB/QCR7, UQCRQ/QCR8, UQCR10/QCR9, UQCR11/QCR10 and a cleavage product of UQCRFS1). This cytochrome bc1 complex then forms a dimer. It depends on heme b as a cofactor.

The protein localises to the mitochondrion inner membrane. In terms of biological role, component of the ubiquinol-cytochrome c reductase complex (complex III or cytochrome b-c1 complex) that is part of the mitochondrial respiratory chain. The b-c1 complex mediates electron transfer from ubiquinol to cytochrome c. Contributes to the generation of a proton gradient across the mitochondrial membrane that is then used for ATP synthesis. This is Cytochrome b (MT-CYB) from Lepus alleni (Antelope jackrabbit).